The chain runs to 317 residues: Anamorsin homolog (317 aa).

Residues 1-192 (MREVLVVSES…ITGVRPNWKA (192 aa)) are N-terminal SAM-like domain. A linker region spans residues 193-216 (KGDRKSSSIHAAPIDGYISKAPDY). The [2Fe-2S] cluster site is built by Cys219, Cys226, Cys229, and Cys231. The fe-S binding site A stretch occupies residues 219-231 (CSTKPRACANCTC). [4Fe-4S] cluster-binding residues include Cys286, Cys289, Cys297, and Cys300. Short sequence motifs (cx2C motif) lie at residues 286 to 289 (CGNC) and 297 to 300 (CDSC). The fe-S binding site B stretch occupies residues 286–300 (CGNCYLGDAFRCDSC).

It belongs to the anamorsin family. In terms of assembly, monomer. [2Fe-2S] cluster is required as a cofactor. It depends on [4Fe-4S] cluster as a cofactor.

Its subcellular location is the cytoplasm. It localises to the mitochondrion intermembrane space. In terms of biological role, component of the cytosolic iron-sulfur (Fe-S) protein assembly (CIA) machinery. Required for the maturation of extramitochondrial Fe-S proteins. Part of an electron transfer chain functioning in an early step of cytosolic Fe-S biogenesis, facilitating the de novo assembly of a [4Fe-4S] cluster on the cytosolic Fe-S scaffold complex. Electrons are transferred from NADPH via a FAD- and FMN-containing diflavin oxidoreductase. Together with the diflavin oxidoreductase, also required for the assembly of the diferric tyrosyl radical cofactor of ribonucleotide reductase (RNR), probably by providing electrons for reduction during radical cofactor maturation in the catalytic small subunit. The sequence is that of Anamorsin homolog from Theileria parva (East coast fever infection agent).